We begin with the raw amino-acid sequence, 259 residues long: Glutathione S-transferase domain-containing protein DDB_G0274705 (259 aa).

One can recognise a GST N-terminal domain in the interval K7–L96. The GST C-terminal domain occupies N102–L232.

This sequence belongs to the GST superfamily.

The protein is Glutathione S-transferase domain-containing protein DDB_G0274705 of Dictyostelium discoideum (Social amoeba).